A 189-amino-acid polypeptide reads, in one-letter code: MTLAAYKEKMKELPLVSLFCSCFLADPLNKSSYKYEADTVDLNWCVISDMEVIELNKCTSGQSFEVILKPPSFDGVPEFNASLPRRRDPSLEEIQKKLEAAEERRKYQEAELLKHLAEKREHEREVIQKAIEENNNFIKMAKEKLAQKMESNKENREAHLAAMLERLQEKDKHAEEVRKNKELKEEASR.

2 S-palmitoyl cysteine lipidation sites follow: Cys20 and Cys22. The region spanning 48–189 (SDMEVIELNK…NKELKEEASR (142 aa)) is the SLD domain. Ser90 is modified (phosphoserine). The stretch at 90 to 188 (SLEEIQKKLE…KNKELKEEAS (99 aa)) forms a coiled coil. A disordered region spans residues 168-189 (QEKDKHAEEVRKNKELKEEASR).

Belongs to the stathmin family.

The protein localises to the golgi apparatus. Its subcellular location is the cell projection. It is found in the growth cone. It localises to the axon. Exhibits microtubule-destabilizing activity. In Homo sapiens (Human), this protein is Stathmin-4 (STMN4).